A 169-amino-acid polypeptide reads, in one-letter code: N-alpha-acetyltransferase 50 (169 aa).

The N-acetyltransferase domain maps to 6 to 155; the sequence is IELGDVTPHN…DAHVLQKNLK (150 aa). Threonine 12 is subject to Phosphothreonine. Tyrosine 31 contacts substrate. N6-acetyllysine is present on residues lysine 34 and lysine 37. Residue tyrosine 73 is part of the active site. Methionine 75 contributes to the substrate binding site. 77-90 is a binding site for acetyl-CoA; the sequence is LGCLAPYRRLGIGT. Tyrosine 110 bears the Phosphotyrosine mark. The active site involves histidine 112. CoA is bound at residue 117 to 126; it reads NESAIDFYRK. A substrate region spans residues 138–141; that stretch reads YYKR. Lysine 140 carries the post-translational modification N6-acetyllysine.

Belongs to the acetyltransferase family. GNAT subfamily. In terms of assembly, component of the N-terminal acetyltransferase E (NatE) complex at least composed of NAA10, NAA15 and NAA50. Interacts with NAA10. Interacts with NAA15. Predominantly interacts with NAA15 in the N-terminal acetyltransferase A complex (NatA complex); the interactions reduce the acetylation activity of the NatA complex. Component of the N-terminal acetyltransferase E (NatE)/HYPK complex at least composed of NAA10, NAA15, NAA50 and HYPK. Within the complex interacts with NAA15. Its capacity to interact with the NatA complex is reduced by HYPK. Interacts with NAA35.

It localises to the cytoplasm. The protein localises to the nucleus. The enzyme catalyses N-terminal L-methionyl-L-alanyl-[protein] + acetyl-CoA = N-terminal N(alpha)-acetyl-L-methionyl-L-alanyl-[protein] + CoA + H(+). It catalyses the reaction N-terminal L-methionyl-L-seryl-[protein] + acetyl-CoA = N-terminal N(alpha)-acetyl-L-methionyl-L-seryl-[protein] + CoA + H(+). The catalysed reaction is N-terminal L-methionyl-L-valyl-[protein] + acetyl-CoA = N-terminal N(alpha)-acetyl-L-methionyl-L-valyl-[protein] + CoA + H(+). It carries out the reaction N-terminal L-methionyl-L-threonyl-[protein] + acetyl-CoA = N-terminal N(alpha)-acetyl-L-methionyl-L-threonyl-[protein] + CoA + H(+). The enzyme catalyses N-terminal L-methionyl-L-lysyl-[protein] + acetyl-CoA = N-terminal N(alpha)-acetyl-L-methionyl-L-lysyl-[protein] + CoA + H(+). It catalyses the reaction N-terminal L-methionyl-L-leucyl-[protein] + acetyl-CoA = N-terminal N(alpha)-acetyl-L-methionyl-L-leucyl-[protein] + CoA + H(+). The catalysed reaction is N-terminal L-methionyl-L-phenylalanyl-[protein] + acetyl-CoA = N-terminal N(alpha)-acetyl-L-methionyl-L-phenylalanyl-[protein] + CoA + H(+). It carries out the reaction N-terminal L-methionyl-L-tyrosyl-[protein] + acetyl-CoA = N-terminal N(alpha)-acetyl-L-methionyl-L-tyrosyl-[protein] + CoA + H(+). Its function is as follows. N-alpha-acetyltransferase that acetylates the N-terminus of proteins that retain their initiating methionine. Has a broad substrate specificity: able to acetylate the initiator methionine of most peptides, except for those with a proline in second position. Also displays N-epsilon-acetyltransferase activity by mediating acetylation of the side chain of specific lysines on proteins. Autoacetylates in vivo. The relevance of N-epsilon-acetyltransferase activity is however unclear: able to acetylate H4 in vitro, but this result has not been confirmed in vivo. Component of N-alpha-acetyltransferase complexes containing NAA10 and NAA15, which has N-alpha-acetyltransferase activity. Does not influence the acetyltransferase activity of NAA10. However, it negatively regulates the N-alpha-acetyltransferase activity of the N-terminal acetyltransferase A complex (also called the NatA complex). The multiprotein complexes probably constitute the major contributor for N-terminal acetylation at the ribosome exit tunnel, with NAA10 acetylating all amino termini that are devoid of methionine and NAA50 acetylating other peptides. Required for sister chromatid cohesion during mitosis by promoting binding of CDCA5/sororin to cohesin: may act by counteracting the function of NAA10. The polypeptide is N-alpha-acetyltransferase 50 (Mus musculus (Mouse)).